Consider the following 512-residue polypeptide: Cytochrome P450 26B1 (512 aa).

Heme is bound at residue Cys441.

Belongs to the cytochrome P450 family. Heme serves as cofactor.

It is found in the endoplasmic reticulum membrane. The protein localises to the microsome membrane. It catalyses the reaction all-trans-retinoate + reduced [NADPH--hemoprotein reductase] + O2 = all-trans-4-hydroxyretinoate + oxidized [NADPH--hemoprotein reductase] + H2O + H(+). The enzyme catalyses all-trans-retinoate + reduced [NADPH--hemoprotein reductase] + O2 = all-trans-18-hydroxyretinoate + oxidized [NADPH--hemoprotein reductase] + H2O + H(+). Its function is as follows. A cytochrome P450 monooxygenase involved in the metabolism of retinoates (RAs), the active metabolites of vitamin A, and critical signaling molecules in animals. RAs exist as at least four different isomers: all-trans-RA (atRA), 9-cis-RA, 13-cis-RA, and 9,13-dicis-RA, where atRA is considered to be the biologically active isomer, although 9-cis-RA and 13-cis-RA also have activity. Catalyzes the hydroxylation of atRA primarily at C-4 and C-18, thereby contributing to the regulation of atRA homeostasis and signaling. Hydroxylation of atRA limits its biological activity and initiates a degradative process leading to its eventual elimination. Involved in the convertion of atRA to all-trans-4-oxo-RA. Can oxidize all-trans-13,14-dihydroretinoate (DRA) to metabolites which could include all-trans-4-oxo-DRA, all-trans-4-hydroxy-DRA, all-trans-5,8-epoxy-DRA, and all-trans-18-hydroxy-DRA. Shows preference for the following substrates: atRA &gt; 9-cis-RA &gt; 13-cis-RA. Plays a central role in germ cell development: acts by degrading RAs in the developing testis, preventing STRA8 expression, thereby leading to delay of meiosis. Required for the maintenance of the undifferentiated state of male germ cells during embryonic development in Sertoli cells, inducing arrest in G0 phase of the cell cycle and preventing meiotic entry. Plays a role in skeletal development, both at the level of patterning and in the ossification of bone and the establishment of some synovial joints. Essential for postnatal survival. Functionally, also has a significant activity in oxidation of tazarotenic acid and may therefore metabolize that xenobiotic in vivo. In Rattus norvegicus (Rat), this protein is Cytochrome P450 26B1 (Cyp26b1).